A 498-amino-acid polypeptide reads, in one-letter code: Probable dipeptidase B (498 aa).

The active site involves cysteine 26.

It belongs to the peptidase C69 family.

It carries out the reaction an L-aminoacyl-L-amino acid + H2O = 2 an L-alpha-amino acid. The polypeptide is Probable dipeptidase B (pepDB) (Streptococcus pyogenes serotype M1).